Here is a 339-residue protein sequence, read N- to C-terminus: NADH-quinone oxidoreductase subunit H (339 aa).

9 helical membrane-spanning segments follow: residues 9–29 (IFPL…LILC), 50–70 (PNVV…KLLF), 82–102 (ILFI…WAVI), 115–135 (VGVL…IIAG), 161–181 (MGLV…SEII), 187–207 (IPWW…ISVL), 235–255 (MGFA…SAMT), 275–295 (IPGF…FLWI), and 311–331 (GWKV…SVLV).

The protein belongs to the complex I subunit 1 family. In terms of assembly, NDH-1 is composed of 14 different subunits. Subunits NuoA, H, J, K, L, M, N constitute the membrane sector of the complex.

The protein resides in the cell inner membrane. It catalyses the reaction a quinone + NADH + 5 H(+)(in) = a quinol + NAD(+) + 4 H(+)(out). Functionally, NDH-1 shuttles electrons from NADH, via FMN and iron-sulfur (Fe-S) centers, to quinones in the respiratory chain. The immediate electron acceptor for the enzyme in this species is believed to be ubiquinone. Couples the redox reaction to proton translocation (for every two electrons transferred, four hydrogen ions are translocated across the cytoplasmic membrane), and thus conserves the redox energy in a proton gradient. This subunit may bind ubiquinone. In Rickettsia rickettsii (strain Iowa), this protein is NADH-quinone oxidoreductase subunit H.